Here is a 311-residue protein sequence, read N- to C-terminus: Olfactory receptor 2Y1 (311 aa).

The Extracellular segment spans residues 1–25 (MGSFNTSFEDGFILVGFSDWPQLEP). Residue asparagine 5 is glycosylated (N-linked (GlcNAc...) asparagine). A helical membrane pass occupies residues 26 to 49 (ILFVFIFIFYSLTLFGNTIIIALS). Residues 50–57 (WLDLRLHT) lie on the Cytoplasmic side of the membrane. Residues 58 to 79 (PMYFFLSHLSLLDLCFTTSTVP) traverse the membrane as a helical segment. Residues 80 to 100 (QLLINLCGVDRTITRGGCVAQ) lie on the Extracellular side of the membrane. Residues cysteine 97 and cysteine 188 are joined by a disulfide bond. A helical transmembrane segment spans residues 101-120 (LFIYLALGSTECVLLVVMAF). Over 121–139 (DRYAAVCRPLHYMAIMHPH) the chain is Cytoplasmic. A helical membrane pass occupies residues 140-158 (LCQTLAIASWGAGFVNSLI). Residues 159–194 (QTGLAMAMPLCGHRLNHFFCEMPVFLKLACADTEGT) are Extracellular-facing. The helical transmembrane segment at 195-218 (EAKMFVARVIVVAVPAALILGSYV) threads the bilayer. The Cytoplasmic segment spans residues 219-235 (HIAHAVLRVKSTAGRRK). The chain crosses the membrane as a helical span at residues 236–258 (AFGTCGSHLLVVFLFYGSAIYTY). The Extracellular portion of the chain corresponds to 259–271 (LQSIHNYSEREGK). N-linked (GlcNAc...) asparagine glycosylation is present at asparagine 264. The chain crosses the membrane as a helical span at residues 272 to 291 (FVALFYTIITPILNPLIYTL). The Cytoplasmic segment spans residues 292–311 (RNKDVKGALWKVLWRGRDSG).

This sequence belongs to the G-protein coupled receptor 1 family.

Its subcellular location is the cell membrane. Odorant receptor. The sequence is that of Olfactory receptor 2Y1 (OR2Y1) from Homo sapiens (Human).